Here is a 418-residue protein sequence, read N- to C-terminus: MNTSAEDVRASAVRARQAAGQLAPLSRAAKDAALLGMAAALLDRSAEILAANALDTAAARAAGTSAALVDRLTLTPERIEAMADGLRQVAALEDPVGEVVRGRVLPNGLELRQVRVPLGVIGIIYEARPNVTVDAAGLCIKSGNAVLLRGSASALNSNRVLVDVLREAAVAAGLPADGVQLVPGADHDSVKHLMRLRGLVDVLIPRGGAGLIRAVVEESTVPVIETGVGNCHVYVDVDADVDTALAITLNAKTQKVSVCNSAETLLVHAGIAAEFLPRVLTALRDAGVTVHGDETVRAVDPSAVPVTDEDWATEYLSLDMAVGVVDSLDQALDHIRRWSSGHTEAIVTRSLAASRRFVASCDSAAVMVNASTRFTDGERFGMGAEIGISTQKLHARGPMGLPELTSTTWVGIGDGHLV.

Belongs to the gamma-glutamyl phosphate reductase family.

Its subcellular location is the cytoplasm. The enzyme catalyses L-glutamate 5-semialdehyde + phosphate + NADP(+) = L-glutamyl 5-phosphate + NADPH + H(+). The protein operates within amino-acid biosynthesis; L-proline biosynthesis; L-glutamate 5-semialdehyde from L-glutamate: step 2/2. Its function is as follows. Catalyzes the NADPH-dependent reduction of L-glutamate 5-phosphate into L-glutamate 5-semialdehyde and phosphate. The product spontaneously undergoes cyclization to form 1-pyrroline-5-carboxylate. The chain is Gamma-glutamyl phosphate reductase from Parafrankia sp. (strain EAN1pec).